The chain runs to 160 residues: Crossover junction endodeoxyribonuclease RuvC (160 aa).

Catalysis depends on residues D7, E70, and D142. Residues D7, E70, and D142 each contribute to the Mg(2+) site.

The protein belongs to the RuvC family. Homodimer which binds Holliday junction (HJ) DNA. The HJ becomes 2-fold symmetrical on binding to RuvC with unstacked arms; it has a different conformation from HJ DNA in complex with RuvA. In the full resolvosome a probable DNA-RuvA(4)-RuvB(12)-RuvC(2) complex forms which resolves the HJ. Mg(2+) serves as cofactor.

The protein resides in the cytoplasm. The enzyme catalyses Endonucleolytic cleavage at a junction such as a reciprocal single-stranded crossover between two homologous DNA duplexes (Holliday junction).. In terms of biological role, the RuvA-RuvB-RuvC complex processes Holliday junction (HJ) DNA during genetic recombination and DNA repair. Endonuclease that resolves HJ intermediates. Cleaves cruciform DNA by making single-stranded nicks across the HJ at symmetrical positions within the homologous arms, yielding a 5'-phosphate and a 3'-hydroxyl group; requires a central core of homology in the junction. The consensus cleavage sequence is 5'-(A/T)TT(C/G)-3'. Cleavage occurs on the 3'-side of the TT dinucleotide at the point of strand exchange. HJ branch migration catalyzed by RuvA-RuvB allows RuvC to scan DNA until it finds its consensus sequence, where it cleaves and resolves the cruciform DNA. In Ehrlichia ruminantium (strain Welgevonden), this protein is Crossover junction endodeoxyribonuclease RuvC.